The sequence spans 212 residues: Probable nicotinate-nucleotide adenylyltransferase (212 aa).

Belongs to the NadD family.

The enzyme catalyses nicotinate beta-D-ribonucleotide + ATP + H(+) = deamido-NAD(+) + diphosphate. It participates in cofactor biosynthesis; NAD(+) biosynthesis; deamido-NAD(+) from nicotinate D-ribonucleotide: step 1/1. Functionally, catalyzes the reversible adenylation of nicotinate mononucleotide (NaMN) to nicotinic acid adenine dinucleotide (NaAD). This chain is Probable nicotinate-nucleotide adenylyltransferase, found in Mycobacterium avium (strain 104).